Reading from the N-terminus, the 389-residue chain is MDLFEYQARDLFEKHGVPVLAGIVATTPEEAKAAAEKIGGVTVVKAQVKVGGRGKAGGVKVAKTPEEAYEYAQQILGMDIKGHTVHRVMIAQGADIAEEYYFSVLLDRANRSYLAMCSVEGGMEIEQLAVERPDALARVDVSPADGITEAKAREIVEQAKFDAETAEKVIPVLVKLGEVYAKEDATLVEVNPLVKTGDGEILALDGKVSLDDNAAFRHPEHAELADKTTADPLEEKAKENDLNYVKLDGEVGIIGNGAGLVMSTLDVVAYAGEKHGDVKPANFLDIGGGASAEVMAAGLDVILGDPQVKSVFVNVFGGITACDAVANGIVKALEILGDSATKPIVVRLDGNNVDEGRAILREANHPLITTADTMDAGADKAAELAHAAK.

The 228-residue stretch at 9 to 236 (RDLFEKHGVP…KTTADPLEEK (228 aa)) folds into the ATP-grasp domain. ATP contacts are provided by residues Lys45, 52–54 (GRG), Ala94, and Glu99. The Mg(2+) site is built by Asn191 and Asp205. Substrate-binding positions include Asn256 and 318-320 (GIT).

The protein belongs to the succinate/malate CoA ligase beta subunit family. In terms of assembly, heterotetramer of two alpha and two beta subunits. The cofactor is Mg(2+).

It catalyses the reaction succinate + ATP + CoA = succinyl-CoA + ADP + phosphate. The enzyme catalyses GTP + succinate + CoA = succinyl-CoA + GDP + phosphate. It participates in carbohydrate metabolism; tricarboxylic acid cycle; succinate from succinyl-CoA (ligase route): step 1/1. Functionally, succinyl-CoA synthetase functions in the citric acid cycle (TCA), coupling the hydrolysis of succinyl-CoA to the synthesis of either ATP or GTP and thus represents the only step of substrate-level phosphorylation in the TCA. The beta subunit provides nucleotide specificity of the enzyme and binds the substrate succinate, while the binding sites for coenzyme A and phosphate are found in the alpha subunit. In Kocuria rhizophila (strain ATCC 9341 / DSM 348 / NBRC 103217 / DC2201), this protein is Succinate--CoA ligase [ADP-forming] subunit beta.